The following is a 520-amino-acid chain: Cytochrome P450 84A1 (520 aa).

M1 bears the N-acetylmethionine mark. A helical membrane pass occupies residues 12-32 (LSDPTTSLVIVVSLFIFISFI). Residue C458 coordinates heme.

Belongs to the cytochrome P450 family. Heme is required as a cofactor.

It localises to the membrane. It participates in aromatic compound metabolism; phenylpropanoid biosynthesis. The polypeptide is Cytochrome P450 84A1 (CYP84A1) (Arabidopsis thaliana (Mouse-ear cress)).